We begin with the raw amino-acid sequence, 164 residues long: Large ribosomal subunit protein bL9 (164 aa).

The protein belongs to the bacterial ribosomal protein bL9 family.

Functionally, binds to the 23S rRNA. In Borrelia hermsii (strain HS1 / DAH), this protein is Large ribosomal subunit protein bL9.